Consider the following 347-residue polypeptide: Dihydroorotase (347 aa).

His-14 and His-16 together coordinate Zn(2+). Substrate contacts are provided by residues 16–18 (HLR) and Asn-42. Lys-100, His-137, and His-175 together coordinate Zn(2+). Lys-100 is modified (N6-carboxylysine). A substrate-binding site is contributed by His-137. Leu-220 contributes to the substrate binding site. Zn(2+) is bound at residue Asp-248. Asp-248 is an active-site residue. Substrate-binding residues include His-252 and Ala-264.

Belongs to the metallo-dependent hydrolases superfamily. DHOase family. Class II DHOase subfamily. Homodimer. Zn(2+) serves as cofactor.

It catalyses the reaction (S)-dihydroorotate + H2O = N-carbamoyl-L-aspartate + H(+). It participates in pyrimidine metabolism; UMP biosynthesis via de novo pathway; (S)-dihydroorotate from bicarbonate: step 3/3. Functionally, catalyzes the reversible cyclization of carbamoyl aspartate to dihydroorotate. The polypeptide is Dihydroorotase (Pseudomonas savastanoi pv. phaseolicola (strain 1448A / Race 6) (Pseudomonas syringae pv. phaseolicola (strain 1448A / Race 6))).